The primary structure comprises 240 residues: DNA repair protein RecO (240 aa).

It belongs to the RecO family.

Involved in DNA repair and RecF pathway recombination. In Actinobacillus pleuropneumoniae serotype 3 (strain JL03), this protein is DNA repair protein RecO.